A 559-amino-acid polypeptide reads, in one-letter code: Spermidine/putrescine import ATP-binding protein PotA (559 aa).

In terms of domain architecture, ABC transporter spans Ile-7 to Ile-448. An ATP-binding site is contributed by Gly-40–Thr-47. The tract at residues Trp-108–Arg-317 is insert.

Belongs to the ABC transporter superfamily. Spermidine/putrescine importer (TC 3.A.1.11.1) family. As to quaternary structure, the complex is composed of two ATP-binding proteins (PotA), two transmembrane proteins (PotB and PotC) and a solute-binding protein (PotD).

It is found in the cell membrane. It carries out the reaction ATP + H2O + polyamine-[polyamine-binding protein]Side 1 = ADP + phosphate + polyamineSide 2 + [polyamine-binding protein]Side 1.. Functionally, part of the ABC transporter complex PotABCD involved in spermidine/putrescine import. Responsible for energy coupling to the transport system. In Mycoplasma genitalium (strain ATCC 33530 / DSM 19775 / NCTC 10195 / G37) (Mycoplasmoides genitalium), this protein is Spermidine/putrescine import ATP-binding protein PotA.